The chain runs to 219 residues: MAFLLHQARFYTTVNHLRDLPPTVQPEIAFAGRSNAGKSTAINVLCNQKRLAFASKTPGRTQHINYFSVGPAAEPVANLVDLPGYGYAEVPGAAKAHWEMLLSSYLATRSQLCGLILMMDSRRPLTDLDRRMIEWFAPTGKPIHTLLTKCDKLTRQESINALRNTQKGLDAYRDQGVKGKLTVQLFSALKRTGLDEAHELIESWLRPSVADEKSEPVAQ.

The EngB-type G domain maps to 24-207; that stretch reads VQPEIAFAGR…HELIESWLRP (184 aa). GTP is bound by residues 32–39, 59–63, 81–84, 148–151, and 186–188; these read GRSNAGKS, GRTQH, DLPG, TKCD, and FSA. Mg(2+) contacts are provided by serine 39 and threonine 61.

The protein belongs to the TRAFAC class TrmE-Era-EngA-EngB-Septin-like GTPase superfamily. EngB GTPase family. Mg(2+) is required as a cofactor.

Functionally, necessary for normal cell division and for the maintenance of normal septation. The polypeptide is Probable GTP-binding protein EngB (Burkholderia cenocepacia (strain HI2424)).